The sequence spans 845 residues: Receptor-like protein Cf-9 homolog (845 aa).

The N-terminal stretch at 1–19 is a signal peptide; it reads MGCVKLVFFMLLKLDLLEF. The N-cap stretch occupies residues 20–70; the sequence is KNMFTVNPNASDYCYDYTDQRMQSYPRTLFWNKSTDCCSWDGIHCDETTGQ. Over 20-794 the chain is Extracellular; that stretch reads KNMFTVNPNA…EEDSPMISWQ (775 aa). 3 N-linked (GlcNAc...) asparagine glycosylation sites follow: Asn28, Asn51, and Asn88. The LRR 1; degenerate repeat unit spans residues 71-94; it reads VVELDLRCSQLQGKFHSNSSLFQL. 25 LRR repeats span residues 95 to 118, 119 to 143, 144 to 171, 172 to 193, 194 to 217, 219 to 242, 244 to 266, 267 to 291, 292 to 316, 318 to 338, 340 to 364, 365 to 388, 390 to 410, 411 to 434, 436 to 458, 459 to 482, 484 to 506, 507 to 531, 532 to 554, 555 to 579, 581 to 605, 649 to 672, 673 to 696, 698 to 721, and 723 to 741; these read SNLKRLDLSFNDFTGSLISPKFGE, FSDLTHLDLSDSNFTGVIPSEISHL, SKLHVLRIHDLNELSLGPHNFELLLKNL, TQLRELNLDSVNISSTIPSNFS, SHLTNLWLPYTELRGVLPERVFHL, DLEFLHLSYNPQLTVRFPTTKWNS, ASLMKLYVHSVNIADRIPESFSH, LTSLHALYMGRCNLSGHIPKPLWNL, TNIESLFLGDNHLEGPIPQLTRFEK, KRLSLGNNNLHGGLEFLSFNR, WTQLEILYFSSNYLTGPIPSNVSGL, QNLGWLFLSSNHLNGSIPSWIFSL, SLVVLDLSNNTFSGKIQEFKS, KTLSTVTLKQNQLEGPIPNSLLNQ, SLQFLLLSHNNISGYISSSICNL, KTLMVLDLGSNNLEGTIPQCVGER, EYLLDLDLSNNRLSGTINTTFSI, GNSFKAISLHGNKLTGKVPRSLINC, KYLKLLDLGNNQLNDTFPNWLGY, LSQLKILSLRSNKLHGPIKSSGSTN, FMRLQILDLSSNGFSGNLPERILGN, LDSNMIINLSKNRFEGHIPSIIGD, LVGLRTLNLSRNALEGHIPASFQN, SVLESLDLSSNRISGEIPQQLASL, and FLEVLNLSHNHLVGCIPKG. N-linked (GlcNAc...) asparagine glycans are attached at residues Asn131, Asn170, Asn183, and Asn191. N-linked (GlcNAc...) asparagine glycosylation is present at Asn241. N-linked (GlcNAc...) asparagine glycosylation is found at Asn279 and Asn290. 4 N-linked (GlcNAc...) asparagine glycosylation sites follow: Asn337, Asn360, Asn378, and Asn398. Residue Asn446 is glycosylated (N-linked (GlcNAc...) asparagine). A glycan (N-linked (GlcNAc...) asparagine) is linked at Asn501. Asn545 is a glycosylation site (N-linked (GlcNAc...) asparagine). Asn656, Asn680, and Asn696 each carry an N-linked (GlcNAc...) asparagine glycan. N-linked (GlcNAc...) asparagine glycosylation is found at Asn728 and Asn749. A C-cap/acidic domain region spans residues 742-794; that stretch reads KQFDSFGNTSYQGNDGLRGFPLSKLCGVDDQVTTPAELDQEEEEEDSPMISWQ. The chain crosses the membrane as a helical span at residues 795–815; sequence GVLVGYGCGLVIGLSVIYIMW. Over 816–845 the chain is Cytoplasmic; the sequence is STQYPAWFSRMDLKLEHIITTRMKKHKKRY.

Belongs to the RLP family.

The protein localises to the cell membrane. In terms of biological role, at the opposite of its homolog Cf-9 found in S.pimpinellifolium, was not able to confer resistance to the fungal pathogen C.fulvum. The polypeptide is Receptor-like protein Cf-9 homolog (Solanum lycopersicum (Tomato)).